Consider the following 475-residue polypeptide: UDP-N-acetylmuramate--L-alanine ligase (475 aa).

125-131 contacts ATP; the sequence is GTHGKTT.

This sequence belongs to the MurCDEF family.

It is found in the cytoplasm. The enzyme catalyses UDP-N-acetyl-alpha-D-muramate + L-alanine + ATP = UDP-N-acetyl-alpha-D-muramoyl-L-alanine + ADP + phosphate + H(+). It participates in cell wall biogenesis; peptidoglycan biosynthesis. In terms of biological role, cell wall formation. The protein is UDP-N-acetylmuramate--L-alanine ligase of Actinobacillus pleuropneumoniae serotype 7 (strain AP76).